Here is a 553-residue protein sequence, read N- to C-terminus: Arginine--tRNA ligase (553 aa).

The short motif at 130-140 (ANPTGDLHIGH) is the 'HIGH' region element.

The protein belongs to the class-I aminoacyl-tRNA synthetase family. Monomer.

It is found in the cytoplasm. The catalysed reaction is tRNA(Arg) + L-arginine + ATP = L-arginyl-tRNA(Arg) + AMP + diphosphate. This is Arginine--tRNA ligase from Staphylococcus aureus (strain USA300 / TCH1516).